Reading from the N-terminus, the 190-residue chain is RNA pyrophosphohydrolase (190 aa).

The 144-residue stretch at 6 to 149 (GYRPNVGIVL…KRGVYARALC (144 aa)) folds into the Nudix hydrolase domain. The short motif at 38–59 (GGMHSDETPVEAMYRELNEEIG) is the Nudix box element.

It belongs to the Nudix hydrolase family. RppH subfamily. Requires a divalent metal cation as cofactor.

Its function is as follows. Accelerates the degradation of transcripts by removing pyrophosphate from the 5'-end of triphosphorylated RNA, leading to a more labile monophosphorylated state that can stimulate subsequent ribonuclease cleavage. This is RNA pyrophosphohydrolase from Xylella fastidiosa (strain M12).